Here is a 256-residue protein sequence, read N- to C-terminus: Thiazole synthase (256 aa).

The active-site Schiff-base intermediate with DXP is Lys96. 1-deoxy-D-xylulose 5-phosphate is bound by residues Gly157, 183-184 (AG), and 205-206 (NT).

It belongs to the ThiG family. In terms of assembly, homotetramer. Forms heterodimers with either ThiH or ThiS.

Its subcellular location is the cytoplasm. The enzyme catalyses [ThiS sulfur-carrier protein]-C-terminal-Gly-aminoethanethioate + 2-iminoacetate + 1-deoxy-D-xylulose 5-phosphate = [ThiS sulfur-carrier protein]-C-terminal Gly-Gly + 2-[(2R,5Z)-2-carboxy-4-methylthiazol-5(2H)-ylidene]ethyl phosphate + 2 H2O + H(+). It participates in cofactor biosynthesis; thiamine diphosphate biosynthesis. Its function is as follows. Catalyzes the rearrangement of 1-deoxy-D-xylulose 5-phosphate (DXP) to produce the thiazole phosphate moiety of thiamine. Sulfur is provided by the thiocarboxylate moiety of the carrier protein ThiS. In vitro, sulfur can be provided by H(2)S. This is Thiazole synthase from Bacillus cereus (strain G9842).